Consider the following 463-residue polypeptide: Glutamate--tRNA ligase 1 (463 aa).

The 'HIGH' region motif lies at 10–20 (PSPTGYLHIGG). The 'KMSKS' region signature appears at 238-242 (KLSKR). An ATP-binding site is contributed by K241.

This sequence belongs to the class-I aminoacyl-tRNA synthetase family. Glutamate--tRNA ligase type 1 subfamily. Monomer.

It localises to the cytoplasm. It carries out the reaction tRNA(Glu) + L-glutamate + ATP = L-glutamyl-tRNA(Glu) + AMP + diphosphate. Catalyzes the attachment of glutamate to tRNA(Glu) in a two-step reaction: glutamate is first activated by ATP to form Glu-AMP and then transferred to the acceptor end of tRNA(Glu). The sequence is that of Glutamate--tRNA ligase 1 from Helicobacter pylori (strain J99 / ATCC 700824) (Campylobacter pylori J99).